The following is a 99-amino-acid chain: Large ribosomal subunit protein bL21 (99 aa).

The protein belongs to the bacterial ribosomal protein bL21 family. In terms of assembly, part of the 50S ribosomal subunit. Contacts protein L20.

Functionally, this protein binds to 23S rRNA in the presence of protein L20. This chain is Large ribosomal subunit protein bL21, found in Mesomycoplasma hyopneumoniae (strain 232) (Mycoplasma hyopneumoniae).